The primary structure comprises 363 residues: Caffeic acid 3-O-methyltransferase (363 aa).

Residue 130-136 (MNQDKVL) participates in substrate binding. Residues 162–180 (AFEYHGKDPRFNKVFNQGM) are substrate binding. Residues Gly-208, Asp-231, Asp-251, Met-252, and Lys-265 each contribute to the S-adenosyl-L-methionine site. His-269 (proton acceptor) is an active-site residue.

Belongs to the class I-like SAM-binding methyltransferase superfamily. Cation-independent O-methyltransferase family. COMT subfamily. Homodimer.

The enzyme catalyses (E)-caffeate + S-adenosyl-L-methionine = (E)-ferulate + S-adenosyl-L-homocysteine + H(+). Its pathway is aromatic compound metabolism; phenylpropanoid biosynthesis. Catalyzes the conversion of caffeic acid to ferulic acid and of 5-hydroxyferulic acid to sinapic acid. The resulting products may subsequently be converted to the corresponding alcohols that are incorporated into lignins. The polypeptide is Caffeic acid 3-O-methyltransferase (COMT1) (Catharanthus roseus (Madagascar periwinkle)).